A 161-amino-acid polypeptide reads, in one-letter code: Afimbrial adhesin AFA-I (161 aa).

Residues 1 to 21 (MKKLAIIGATSVMMMTGTAQA) form the signal peptide.

It belongs to the Dr-adhesin family.

It is found in the fimbrium. Hemagglutinins of uropathogenic E.coli mediate adherence to the upper urinary tract. These adhesins bind to the Dr blood group antigen and also agglutinate human erythrocytes in the presence of D-mannose (mannose-resistant hemagglutination (MRHA)). This chain is Afimbrial adhesin AFA-I (afaE1), found in Escherichia coli.